The following is a 180-amino-acid chain: Bifunctional protein PyrR (180 aa).

Residues 99-111 (VILVDDVLYTCRT) carry the PRPP-binding motif.

Belongs to the purine/pyrimidine phosphoribosyltransferase family. PyrR subfamily. Homodimer and homohexamer; in equilibrium.

It catalyses the reaction UMP + diphosphate = 5-phospho-alpha-D-ribose 1-diphosphate + uracil. Its function is as follows. Regulates transcriptional attenuation of the pyrimidine nucleotide (pyr) operon by binding in a uridine-dependent manner to specific sites on pyr mRNA. This disrupts an antiterminator hairpin in the RNA and favors formation of a downstream transcription terminator, leading to a reduced expression of downstream genes. Also displays a weak uracil phosphoribosyltransferase activity which is not physiologically significant. The sequence is that of Bifunctional protein PyrR from Clostridium botulinum (strain Eklund 17B / Type B).